The primary structure comprises 220 residues: Glycerol-3-phosphate acyltransferase (220 aa).

A run of 6 helical transmembrane segments spans residues 11-31, 70-90, 96-116, 127-147, 153-173, and 193-213; these read INVIFTLLGYLIGGIPFGYAL, LLILILDLFKGMFAVFLSKLF, LQWMVAIASILGHCYSPFLNF, GSVVLLIPIESLIGLMVWFFV, ISSLASIVGVGTATILIFFVP, and MVLIFIFTLIKHVGNIFNLLA.

Belongs to the PlsY family. As to quaternary structure, probably interacts with PlsX.

The protein resides in the cell inner membrane. The enzyme catalyses an acyl phosphate + sn-glycerol 3-phosphate = a 1-acyl-sn-glycero-3-phosphate + phosphate. The protein operates within lipid metabolism; phospholipid metabolism. Its function is as follows. Catalyzes the transfer of an acyl group from acyl-phosphate (acyl-PO(4)) to glycerol-3-phosphate (G3P) to form lysophosphatidic acid (LPA). This enzyme utilizes acyl-phosphate as fatty acyl donor, but not acyl-CoA or acyl-ACP. In Helicobacter acinonychis (strain Sheeba), this protein is Glycerol-3-phosphate acyltransferase.